The primary structure comprises 421 residues: Testin (421 aa).

A PET domain is found at 92 to 199 (MILTNPVAAK…GDVKLPCEMD (108 aa)). Residues 133-164 (EKQPVAGSEGAQYRKKQLAKQLPAHDQDPSKC) form a disordered region. Residues 155 to 164 (PAHDQDPSKC) show a composition bias toward basic and acidic residues. LIM zinc-binding domains are found at residues 234–297 (YFCY…CDSE), 299–359 (PRCA…NHAV), and 362–421 (QGCH…KMMS).

It belongs to the prickle / espinas / testin family. In terms of assembly, interacts via LIM domain 1 with ZYX. Interacts (via LIM domain 3) with ENAH and VASP. Interacts with ALKBH4, talin, actin, alpha-actinin, GRIP1 and PXN. Interacts (via LIM domain 2) with ACTL7A (via N-terminus). Heterodimer with ACTL7A; the heterodimer interacts with ENAH to form a heterotrimer.

It localises to the cytoplasm. Its subcellular location is the cell junction. The protein localises to the focal adhesion. Functionally, scaffold protein that may play a role in cell adhesion, cell spreading and in the reorganization of the actin cytoskeleton. Plays a role in the regulation of cell proliferation. May act as a tumor suppressor. The chain is Testin (TES) from Plecturocebus moloch (Dusky titi monkey).